Consider the following 61-residue polypeptide: Small ribosomal subunit protein uS14B (61 aa).

Zn(2+)-binding residues include cysteine 24, cysteine 27, cysteine 40, and cysteine 43.

It belongs to the universal ribosomal protein uS14 family. Zinc-binding uS14 subfamily. In terms of assembly, part of the 30S ribosomal subunit. Contacts proteins S3 and S10. Zn(2+) is required as a cofactor.

Functionally, binds 16S rRNA, required for the assembly of 30S particles and may also be responsible for determining the conformation of the 16S rRNA at the A site. The chain is Small ribosomal subunit protein uS14B from Shouchella clausii (strain KSM-K16) (Alkalihalobacillus clausii).